A 135-amino-acid chain; its full sequence is Ribosome-binding factor A (135 aa).

Belongs to the RbfA family. In terms of assembly, monomer. Binds 30S ribosomal subunits, but not 50S ribosomal subunits or 70S ribosomes.

The protein resides in the cytoplasm. One of several proteins that assist in the late maturation steps of the functional core of the 30S ribosomal subunit. Associates with free 30S ribosomal subunits (but not with 30S subunits that are part of 70S ribosomes or polysomes). Required for efficient processing of 16S rRNA. May interact with the 5'-terminal helix region of 16S rRNA. The protein is Ribosome-binding factor A of Hyphomonas neptunium (strain ATCC 15444).